Here is a 197-residue protein sequence, read N- to C-terminus: UPF0462 protein C4orf33 homolog (197 aa).

It belongs to the UPF0462 family.

The sequence is that of UPF0462 protein C4orf33 homolog from Danio rerio (Zebrafish).